A 617-amino-acid chain; its full sequence is Serine/threonine-protein phosphatase 2A activator 1 (617 aa).

Over residues 1 to 11 (MDPTSKRPPPA) the composition is skewed to pro residues. Disordered regions lie at residues 1-25 (MDPT…PKLE), 84-169 (VSTS…ESES), 230-261 (GAGG…TNEQ), 376-398 (SSPN…SDIT), and 572-617 (RFTP…PWTK). Positions 84-93 (VSTSEPTTDG) are enriched in polar residues. Low complexity predominate over residues 94–104 (QQQQQQQQQRQ). Over residues 239–252 (EEGTETETETETEG) the composition is skewed to acidic residues.

This sequence belongs to the PTPA-type PPIase family.

Its subcellular location is the cytoplasm. The protein resides in the nucleus. It catalyses the reaction [protein]-peptidylproline (omega=180) = [protein]-peptidylproline (omega=0). Functionally, PPIases accelerate the folding of proteins. It catalyzes the cis-trans isomerization of proline imidic peptide bonds in oligopeptides. Acts as a regulatory subunit for PP2A-like phosphatases modulating their activity or substrate specificity, probably by inducing a conformational change in the catalytic subunit, a direct target of the PPIase. Can reactivate inactive phosphatase PP2A-phosphatase methylesterase complexes (PP2Ai) in presence of ATP and Mg(2+) by dissociating the inactive form from the complex. This chain is Serine/threonine-protein phosphatase 2A activator 1 (rrd-1), found in Neurospora crassa (strain ATCC 24698 / 74-OR23-1A / CBS 708.71 / DSM 1257 / FGSC 987).